The sequence spans 389 residues: Urea transporter 1 (389 aa).

5 helical membrane-spanning segments follow: residues Pro-53–Asn-73, Trp-91–Leu-110, Leu-116–Phe-136, Phe-143–Ala-163, and Leu-173–His-193. Residue Asn-211 is glycosylated (N-linked (GlcNAc...) asparagine). Helical transmembrane passes span Gly-242 to Ile-262, Ile-281 to Phe-301, Leu-310 to Met-330, and Val-333 to Thr-353.

It belongs to the urea transporter family. As to quaternary structure, homotrimer; each subunit contains a pore through which urea permeates. Identified in a complex with STOM. Detected in erythrocytes (at protein level). Expressed in spleen erythroblasts and tumoral kidney.

Its subcellular location is the cell membrane. The protein resides in the basolateral cell membrane. The catalysed reaction is urea(in) = urea(out). With respect to regulation, inhibited by phloretin and para-chloromercuribenzene sulfonate. Mediates the transport of urea driven by a concentration gradient across the cell membrane of erythrocytes. Also mediates the transport of urea across the cell membrane of the renal inner medullary collecting duct which is critical to the urinary concentrating mechanism. Facilitates water transport in erythrocytes. The sequence is that of Urea transporter 1 (SLC14A1) from Homo sapiens (Human).